A 164-amino-acid polypeptide reads, in one-letter code: Transcription antitermination protein NusB (164 aa).

The protein belongs to the NusB family.

Functionally, involved in transcription antitermination. Required for transcription of ribosomal RNA (rRNA) genes. Binds specifically to the boxA antiterminator sequence of the ribosomal RNA (rrn) operons. This is Transcription antitermination protein NusB from Desulfovibrio desulfuricans (strain ATCC 27774 / DSM 6949 / MB).